Here is a 375-residue protein sequence, read N- to C-terminus: Queuine tRNA-ribosyltransferase (375 aa).

The active-site Proton acceptor is Asp-90. Substrate is bound by residues 90–94 (DSGGF), Asp-144, Gln-190, and Gly-217. Residues 248-254 (GIGTPHY) are RNA binding. Asp-267 acts as the Nucleophile in catalysis. Positions 272 to 276 (ARITR) are RNA binding; important for wobble base 34 recognition. Zn(2+) is bound by residues Cys-305, Cys-307, Cys-310, and His-336.

It belongs to the queuine tRNA-ribosyltransferase family. Homodimer. Within each dimer, one monomer is responsible for RNA recognition and catalysis, while the other monomer binds to the replacement base PreQ1. The cofactor is Zn(2+).

The catalysed reaction is 7-aminomethyl-7-carbaguanine + guanosine(34) in tRNA = 7-aminomethyl-7-carbaguanosine(34) in tRNA + guanine. It functions in the pathway tRNA modification; tRNA-queuosine biosynthesis. Functionally, catalyzes the base-exchange of a guanine (G) residue with the queuine precursor 7-aminomethyl-7-deazaguanine (PreQ1) at position 34 (anticodon wobble position) in tRNAs with GU(N) anticodons (tRNA-Asp, -Asn, -His and -Tyr). Catalysis occurs through a double-displacement mechanism. The nucleophile active site attacks the C1' of nucleotide 34 to detach the guanine base from the RNA, forming a covalent enzyme-RNA intermediate. The proton acceptor active site deprotonates the incoming PreQ1, allowing a nucleophilic attack on the C1' of the ribose to form the product. After dissociation, two additional enzymatic reactions on the tRNA convert PreQ1 to queuine (Q), resulting in the hypermodified nucleoside queuosine (7-(((4,5-cis-dihydroxy-2-cyclopenten-1-yl)amino)methyl)-7-deazaguanosine). In Borreliella burgdorferi (strain ATCC 35210 / DSM 4680 / CIP 102532 / B31) (Borrelia burgdorferi), this protein is Queuine tRNA-ribosyltransferase.